Here is a 389-residue protein sequence, read N- to C-terminus: Tyrosine aminotransferase (389 aa).

Lysine 242 is modified (N6-(pyridoxal phosphate)lysine).

This sequence belongs to the class-I pyridoxal-phosphate-dependent aminotransferase family. As to quaternary structure, homodimer. Pyridoxal 5'-phosphate is required as a cofactor.

The enzyme catalyses L-tyrosine + 2-oxoglutarate = 3-(4-hydroxyphenyl)pyruvate + L-glutamate. The protein operates within amino-acid degradation; L-phenylalanine degradation; acetoacetate and fumarate from L-phenylalanine: step 2/6. Transaminase involved in tyrosine breakdown. Converts tyrosine to p-hydroxyphenylpyruvate. The chain is Tyrosine aminotransferase (tatA) from Rhizobium meliloti (strain 1021) (Ensifer meliloti).